A 143-amino-acid polypeptide reads, in one-letter code: Anti-sigma F factor (143 aa).

This sequence belongs to the anti-sigma-factor family.

The catalysed reaction is L-seryl-[protein] + ATP = O-phospho-L-seryl-[protein] + ADP + H(+). It catalyses the reaction L-threonyl-[protein] + ATP = O-phospho-L-threonyl-[protein] + ADP + H(+). In terms of biological role, binds to sigma F and blocks its ability to form an RNA polymerase holoenzyme (E-sigma F). Phosphorylates SpoIIAA on a serine residue. This phosphorylation may enable SpoIIAA to act as an anti-anti-sigma factor that counteracts SpoIIAB and thus releases sigma F from inhibition. This Caldanaerobacter subterraneus subsp. tengcongensis (strain DSM 15242 / JCM 11007 / NBRC 100824 / MB4) (Thermoanaerobacter tengcongensis) protein is Anti-sigma F factor.